A 347-amino-acid chain; its full sequence is CRISPR-associated endonuclease Cas1 4 (347 aa).

Residues 1-21 (MNIENEVHIENASESKREPKP) show a composition bias toward basic and acidic residues. Positions 1–25 (MNIENEVHIENASESKREPKPPEGL) are disordered. Mn(2+) contacts are provided by glutamate 176, histidine 241, and glutamate 256.

It belongs to the CRISPR-associated endonuclease Cas1 family. In terms of assembly, homodimer, forms a heterotetramer with a Cas2 homodimer. Requires Mg(2+) as cofactor. The cofactor is Mn(2+).

Its function is as follows. CRISPR (clustered regularly interspaced short palindromic repeat), is an adaptive immune system that provides protection against mobile genetic elements (viruses, transposable elements and conjugative plasmids). CRISPR clusters contain spacers, sequences complementary to antecedent mobile elements, and target invading nucleic acids. CRISPR clusters are transcribed and processed into CRISPR RNA (crRNA). Acts as a dsDNA endonuclease. Involved in the integration of spacer DNA into the CRISPR cassette. The chain is CRISPR-associated endonuclease Cas1 4 from Methanospirillum hungatei JF-1 (strain ATCC 27890 / DSM 864 / NBRC 100397 / JF-1).